A 314-amino-acid polypeptide reads, in one-letter code: 3'-5' exoribonuclease YhaM (314 aa).

Residues 163-279 (HVVSMLDLAK…LHYIDNLDAK (117 aa)) enclose the HD domain.

The protein belongs to the YhaM family.

Its function is as follows. Shows a 3'-5' exoribonuclease activity. This Bacillus mycoides (strain KBAB4) (Bacillus weihenstephanensis) protein is 3'-5' exoribonuclease YhaM.